A 44-amino-acid chain; its full sequence is pyr operon leader peptide (44 aa).

In Shigella flexneri, this protein is pyr operon leader peptide (pyrL).